Reading from the N-terminus, the 369-residue chain is Fructose-bisphosphate aldolase (369 aa).

Aspartate 40 lines the dihydroxyacetone phosphate pocket. D-glyceraldehyde 3-phosphate is bound by residues serine 42 and threonine 45. Arginine 49 is a beta-D-fructose 1,6-bisphosphate binding site. A D-glyceraldehyde 3-phosphate-binding site is contributed by lysine 113. Lysine 152 contributes to the dihydroxyacetone phosphate binding site. Glutamate 195 contacts D-glyceraldehyde 3-phosphate. The active-site Proton acceptor is glutamate 195. Positions 237, 279, and 280 each coordinate dihydroxyacetone phosphate. Residue lysine 237 is the Schiff-base intermediate with dihydroxyacetone phosphate of the active site. Residues 279 to 281 and serine 307 each bind beta-D-fructose 1,6-bisphosphate; that span reads SGG. Dihydroxyacetone phosphate-binding residues include glycine 309 and arginine 310. Residue arginine 310 participates in beta-D-fructose 1,6-bisphosphate binding.

Belongs to the class I fructose-bisphosphate aldolase family. In terms of assembly, homotetramer. Interacts with TRAP (via cytoplasmic domain); the interaction prevents substrate binding and thereby inhibits aldolase activity. Interacts with MTRAP (via cytoplasmic domain); MTRAP phosphorylation may increase the binding to FBPA. Interact with RH1 (via cytoplasmic domain). Interacts with RH2b (via cytoplasmic domain). Interacts with RH4 (via cytoplasmic domain). Interacts with AMA1 (via cytoplasmic domain); the interaction is weak, however it may be increased upon AMA1 phosphorylation. Interacts with EBA140 (via cytoplasmic domain); the interaction is weak. Interacts with EBA175 (via cytoplasmic domain); the interaction is weak. Interacts with EBA181 (via cytoplasmic domain); the interaction is weak. Interacts with G-actin and F-actin. May interact with ACT2/actin II; the interaction inhibits FBPA catalytic activity. Interacts with human SLC4A1/band 3 (via N-terminus); the interaction inhibits FBPA catalytic activity.

It localises to the cytoplasm. It is found in the membrane. Its subcellular location is the host cell membrane. It catalyses the reaction beta-D-fructose 1,6-bisphosphate = D-glyceraldehyde 3-phosphate + dihydroxyacetone phosphate. The protein operates within carbohydrate degradation; glycolysis; D-glyceraldehyde 3-phosphate and glycerone phosphate from D-glucose: step 4/4. With respect to regulation, the cytoplasmic tail of TRAP and probably other adhesins acts as a competitive inhibitor as the binding sites of the glycolytic substrate fructose 1,6-bisphosphate and TRAP partially overlap. Plays a key role in glycolysis by catalyzing the cleavage of fructose 1,6-bisphosphate into dihydroxyacetone phosphate and glyceraldehyde 3-phosphate. Independently of its catalytic activity, connects the actin filaments, and thus the actomyosin motor, to cell surface adhesins of the thrombospondin-related anonymous protein (TRAP), the erythrocyte binding ligand (EBL) and reticulocyte binding homolog (RH) protein families; this interaction is probably involved in transducing the motor force across the parasite surface required for sporozoite and ookinete gliding motility and merozoite invasion. Stimulates actin polymerisation. The protein is Fructose-bisphosphate aldolase of Plasmodium falciparum (isolate 3D7).